The primary structure comprises 103 residues: Large ribosomal subunit protein bL21 (103 aa).

Belongs to the bacterial ribosomal protein bL21 family. As to quaternary structure, part of the 50S ribosomal subunit. Contacts protein L20.

Functionally, this protein binds to 23S rRNA in the presence of protein L20. The protein is Large ribosomal subunit protein bL21 of Brevibacillus brevis (strain 47 / JCM 6285 / NBRC 100599).